We begin with the raw amino-acid sequence, 547 residues long: MARYVFITGGVVSSLGKGLASAALGALLQARGFSVRLRKLDPYLNVDPGTMSPFEHGEVFVTDDGAETDLDLGHYERFTGVSARKTDSVSSGRIYSNVLEKERRGDYLGKTIQVIPHVTNEIKDFLRVGEDEVDFMLCEIGGTVGDIEGLPFFEAIRQFAQDKPRGQCIFVHLTLLPYVSASHELKTKPTQHSVKELRSIGIAPDVLLLRSEHPIPEKEREKIALFCNVRKEAVIAAYDLKTIYEAPLAYHREGLDQAVLDAFGISPAPKPNLDRWVDVMDRLEHAEGEVRVAIVGKYTQLEDAYKSIAEALTHGGMANRTRVRAEWINAELFEREDPSPFLEGFHAILVPGGFGERGTEGKIRAAQYAREKGIPYLGICLGMQMAVIEAARNLAHVKDAGSEEFDHEIGRKRYTPVVYHLKEWIQGNHIVERKHDDDKGGTMRLGAYTAALAAGSRVATIYGSTEIEERHRHRYEVDVRYREALEGCGLTFSGMSPDGRLPEIVEIKDHPWFVGVQFHPELKSKPFAPHPLFADFIRAAVEVSRLV.

Positions 1-265 (MARYVFITGG…DQAVLDAFGI (265 aa)) are amidoligase domain. Residue Ser-13 coordinates CTP. Residue Ser-13 participates in UTP binding. Residues 14–19 (SLGKGL) and Asp-71 each bind ATP. Residues Asp-71 and Glu-139 each contribute to the Mg(2+) site. CTP is bound by residues 146–148 (DIE), 186–191 (KTKPTQ), and Lys-222. UTP contacts are provided by residues 186-191 (KTKPTQ) and Lys-222. A Glutamine amidotransferase type-1 domain is found at 291-546 (RVAIVGKYTQ…IRAAVEVSRL (256 aa)). Position 353 (Gly-353) interacts with L-glutamine. The active-site Nucleophile; for glutamine hydrolysis is Cys-380. L-glutamine contacts are provided by residues 381 to 384 (LGMQ), Glu-404, and Arg-474. Residues His-519 and Glu-521 contribute to the active site.

Belongs to the CTP synthase family. Homotetramer.

It carries out the reaction UTP + L-glutamine + ATP + H2O = CTP + L-glutamate + ADP + phosphate + 2 H(+). The enzyme catalyses L-glutamine + H2O = L-glutamate + NH4(+). The catalysed reaction is UTP + NH4(+) + ATP = CTP + ADP + phosphate + 2 H(+). Its pathway is pyrimidine metabolism; CTP biosynthesis via de novo pathway; CTP from UDP: step 2/2. With respect to regulation, allosterically activated by GTP, when glutamine is the substrate; GTP has no effect on the reaction when ammonia is the substrate. The allosteric effector GTP functions by stabilizing the protein conformation that binds the tetrahedral intermediate(s) formed during glutamine hydrolysis. Inhibited by the product CTP, via allosteric rather than competitive inhibition. Functionally, catalyzes the ATP-dependent amination of UTP to CTP with either L-glutamine or ammonia as the source of nitrogen. Regulates intracellular CTP levels through interactions with the four ribonucleotide triphosphates. This chain is CTP synthase, found in Cereibacter sphaeroides (strain ATCC 17025 / ATH 2.4.3) (Rhodobacter sphaeroides).